The chain runs to 604 residues: Prostaglandin G/H synthase 2 (604 aa).

The N-terminal stretch at Met-1–Ala-17 is a signal peptide. Residues Ala-18–Ser-55 enclose the EGF-like domain. 4 disulfide bridges follow: Cys-21/Cys-32, Cys-22/Cys-145, Cys-26/Cys-42, and Cys-44/Cys-54. Residue Asn-53 is glycosylated (N-linked (GlcNAc...) asparagine). Arg-106 contacts substrate. Asn-130 carries N-linked (GlcNAc...) asparagine glycosylation. His-193 (proton acceptor) is an active-site residue. Substrate is bound at residue Tyr-341. Residue Tyr-371 is the For cyclooxygenase activity of the active site. His-374 provides a ligand contact to heme b. N-linked (GlcNAc...) asparagine glycosylation is present at Asn-396. Cys-526 is subject to S-nitrosocysteine. A disulfide bond links Cys-555 and Cys-561. A glycan (N-linked (GlcNAc...) asparagine) is linked at Asn-580.

Belongs to the prostaglandin G/H synthase family. Homodimer. Heme b is required as a cofactor. In terms of processing, S-nitrosylation by NOS2 (iNOS) activates enzyme activity. S-nitrosylation may take place on different Cys residues in addition to Cys-526.

It is found in the microsome membrane. It localises to the endoplasmic reticulum membrane. Its subcellular location is the nucleus inner membrane. The protein localises to the nucleus outer membrane. It carries out the reaction (5Z,8Z,11Z,14Z)-eicosatetraenoate + AH2 + 2 O2 = prostaglandin H2 + A + H2O. The catalysed reaction is (5Z,8Z,11Z,14Z)-eicosatetraenoate + 2 O2 = prostaglandin G2. It catalyses the reaction prostaglandin G2 + AH2 = prostaglandin H2 + A + H2O. The enzyme catalyses (5Z,8Z,11Z,14Z,17Z)-eicosapentaenoate + 2 O2 = prostaglandin G3. It carries out the reaction prostaglandin G3 + AH2 = prostaglandin H3 + A + H2O. The catalysed reaction is (8Z,11Z,14Z)-eicosatrienoate + 2 O2 = prostaglandin G1. It catalyses the reaction prostaglandin G1 + AH2 = prostaglandin H1 + A + H2O. The enzyme catalyses 2-(5Z,8Z,11Z,14Z)-eicosatetraenoyl-sn-glycero-3-phosphoethanolamine + 2 O2 = 2-(prostaglandin G2)-sn-glycero-3-phosphoethanolamine. It carries out the reaction 2-(prostaglandin G2)-sn-glycero-3-phosphoethanolamine + AH2 = 2-(prostaglandin H2)-sn-glycero-3-phosphoethanolamine + A + H2O. The catalysed reaction is 2-(5Z,8Z,11Z,14Z)-eicosatetraenoyl-sn-glycero-3-phosphocholine + 2 O2 = 2-(prostaglandin G2)-sn-glycero-3-phosphocholine. It catalyses the reaction 2-(prostaglandin G2)-sn-glycero-3-phosphocholine + AH2 = 2-(prostaglandin H2)-sn-glycero-3-phosphocholine + A + H2O. The enzyme catalyses (15S)-hydroperoxy-(5Z,8Z,11Z,13E)-eicosatetraenoate + AH2 = (15S)-hydroxy-(5Z,8Z,11Z,13E)-eicosatetraenoate + A + H2O. It carries out the reaction 2-(5Z,8Z,11Z,14Z)-eicosatetraenoyl-sn-glycero-3-phosphocholine + AH2 + O2 = 2-[(15S)-hydroxy-(5Z,8Z,11Z,13E)-eicosatetraenoyl]-sn-glycero-3-phosphocholine + A + H2O. The catalysed reaction is 2-(5Z,8Z,11Z,14Z)-eicosatetraenoyl-sn-glycero-3-phosphocholine + AH2 + O2 = 2-[(15R)-hydroxy-(5Z,8Z,11Z,13E)-eicosatetraenoyl]-sn-glycero-3-phosphocholine + A + H2O. It catalyses the reaction 2-(5Z,8Z,11Z,14Z)-eicosatetraenoyl-sn-glycero-3-phosphocholine + AH2 + O2 = 2-[(11R)-hydroxy-(5Z,8Z,12E,14Z)-eicosatetraenoyl]-sn-glycero-3-phosphocholine + A + H2O. The enzyme catalyses (9Z,12Z)-octadecadienoate + AH2 + O2 = 9-hydroxy-(10E,12Z)-octadecadienoate + A + H2O. It carries out the reaction (9Z,12Z)-octadecadienoate + AH2 + O2 = 13-hydroxy-(9Z,11E)-octadecadienoate + A + H2O. The catalysed reaction is (5Z,8Z,11Z,14Z)-eicosatetraenoate + AH2 + O2 = (15R)-hydroxy-(5Z,8Z,11Z,13E)-eicosatetraenoate + A + H2O. It catalyses the reaction (5Z,8Z,11Z,14Z)-eicosatetraenoate + AH2 + O2 = (11R)-hydroxy-(5Z,8Z,12E,14Z)-eicosatetraenoate + A + H2O. The enzyme catalyses (5Z,8Z,11Z,14Z,17Z)-eicosapentaenoate + AH2 + O2 = (11R)-hydroxy-(5Z,8Z,12E,14Z,17Z)-eicosapentaenoate + A + H2O. It carries out the reaction (5Z,8Z,11Z,14Z,17Z)-eicosapentaenoate + AH2 + O2 = (18S)-hydroxy-(5Z,8Z,11Z,14Z,16E)-eicosapentaenoate + A + H2O. The catalysed reaction is (5Z,8Z,11Z,14Z,17Z)-eicosapentaenoate + AH2 + O2 = (18R)-hydroxy-(5Z,8Z,11Z,14Z,16E)-eicosapentaenoate + A + H2O. It catalyses the reaction (5Z,8Z,11Z,14Z,17Z)-eicosapentaenoate + AH2 + O2 = (15R)-hydroxy-(5Z,8Z,11Z,13E,17Z)-eicosapentaenoate + A + H2O. The enzyme catalyses (5Z,8Z,11Z,14Z,17Z)-eicosapentaenoate + AH2 + O2 = (15S)-hydroxy-(5Z,8Z,11Z,13E,17Z)-eicosapentaenoate + A + H2O. It carries out the reaction (7Z,10Z,13Z,16Z,19Z)-docosapentaenoate + AH2 + O2 = 13R-hydroxy-(7Z,10Z,14E,16Z,19Z)-docosapentaenoate + A + H2O. The catalysed reaction is (4Z,7Z,10Z,13Z,16Z,19Z)-docosahexaenoate + AH2 + O2 = 13-hydroxy-(4Z,7Z,10Z,14E,16Z,19Z)-docosahexaenoate + A + H2O. It catalyses the reaction (5S)-hydroxy-(6E,8Z,11Z,14Z)-eicosatetraenoate + AH2 + O2 = (5S,15R)-dihydroxy-(6E,8Z,11Z,13E)-eicosatetraenoate + A + H2O. The enzyme catalyses (4Z,7Z,10Z,13Z,16Z,19Z)-docosahexaenoate + AH2 + O2 = 17R-hydroxy-(4Z,7Z,10Z,13Z,15E,19Z)-docosahexaenoate + A + H2O. It carries out the reaction (5S)-hydroxy-(6E,8Z,11Z,14Z)-eicosatetraenoate + AH2 + O2 = (5S,15S)-dihydroxy-(6E,8Z,11Z,13E)-eicosatetraenoate + A + H2O. The catalysed reaction is (5S)-hydroxy-(6E,8Z,11Z,14Z)-eicosatetraenoate + AH2 + O2 = (5S,11R)-dihydroxy-(6E,8Z,12E,14Z)-eicosatetraenoate + A + H2O. It catalyses the reaction 2-(5Z,8Z,11Z,14Z-eicosatetraenoyl)-glycerol + 2 O2 = 2-glyceryl-prostaglandin G2. The enzyme catalyses 2-glyceryl-prostaglandin G2 + AH2 = 2-glyceryl-prostaglandin H2 + A + H2O. It carries out the reaction (5Z,8Z,11Z,14Z)-eicosatetraenoate + O2 = (15R)-hydroperoxy-(5Z,8Z,11Z,13E)-eicosatetraenoate. The catalysed reaction is (5Z,8Z,11Z,14Z)-eicosatetraenoate + O2 = 11R-hydroperoxy-(5Z,8Z,12E,14Z)-eicosatetraenoate. It catalyses the reaction (9Z,12Z)-octadecadienoate + AH2 + O2 = (9R)-hydroxy-(10E,12Z)-octadecadienoate + A + H2O. The enzyme catalyses (9Z,12Z)-octadecadienoate + AH2 + O2 = (9S)-hydroxy-(10E,12Z)-octadecadienoate + A + H2O. It carries out the reaction (9Z,12Z)-octadecadienoate + AH2 + O2 = (13S)-hydroxy-(9Z,11E)-octadecadienoate + A + H2O. The catalysed reaction is (9Z,12Z)-octadecadienoate + AH2 + O2 = (13R)-hydroxy-(9Z,11E)-octadecadienoate + A + H2O. The protein operates within lipid metabolism; prostaglandin biosynthesis. In terms of biological role, dual cyclooxygenase and peroxidase in the biosynthesis pathway of prostanoids, a class of C20 oxylipins mainly derived from arachidonate ((5Z,8Z,11Z,14Z)-eicosatetraenoate, AA, C20:4(n-6)), with a particular role in the inflammatory response. The cyclooxygenase activity oxygenates AA to the hydroperoxy endoperoxide prostaglandin G2 (PGG2), and the peroxidase activity reduces PGG2 to the hydroxy endoperoxide prostaglandin H2 (PGH2), the precursor of all 2-series prostaglandins and thromboxanes. This complex transformation is initiated by abstraction of hydrogen at carbon 13 (with S-stereochemistry), followed by insertion of molecular O2 to form the endoperoxide bridge between carbon 9 and 11 that defines prostaglandins. The insertion of a second molecule of O2 (bis-oxygenase activity) yields a hydroperoxy group in PGG2 that is then reduced to PGH2 by two electrons. Similarly catalyzes successive cyclooxygenation and peroxidation of dihomo-gamma-linoleate (DGLA, C20:3(n-6)) and eicosapentaenoate (EPA, C20:5(n-3)) to corresponding PGH1 and PGH3, the precursors of 1- and 3-series prostaglandins. In an alternative pathway of prostanoid biosynthesis, converts 2-arachidonoyl lysophopholipids to prostanoid lysophopholipids, which are then hydrolyzed by intracellular phospholipases to release free prostanoids. Metabolizes 2-arachidonoyl glycerol yielding the glyceryl ester of PGH2, a process that can contribute to pain response. Generates lipid mediators from n-3 and n-6 polyunsaturated fatty acids (PUFAs) via a lipoxygenase-type mechanism. Oxygenates PUFAs to hydroperoxy compounds and then reduces them to corresponding alcohols. Plays a role in the generation of resolution phase interaction products (resolvins) during both sterile and infectious inflammation. Metabolizes docosahexaenoate (DHA, C22:6(n-3)) to 17R-HDHA, a precursor of the D-series resolvins (RvDs). As a component of the biosynthetic pathway of E-series resolvins (RvEs), converts eicosapentaenoate (EPA, C20:5(n-3)) primarily to 18S-HEPE that is further metabolized by ALOX5 and LTA4H to generate 18S-RvE1 and 18S-RvE2. In vascular endothelial cells, converts docosapentaenoate (DPA, C22:5(n-3)) to 13R-HDPA, a precursor for 13-series resolvins (RvTs) shown to activate macrophage phagocytosis during bacterial infection. In activated leukocytes, contributes to oxygenation of hydroxyeicosatetraenoates (HETE) to diHETES (5,15-diHETE and 5,11-diHETE). Can also use linoleate (LA, (9Z,12Z)-octadecadienoate, C18:2(n-6)) as substrate and produce hydroxyoctadecadienoates (HODEs) in a regio- and stereospecific manner, being (9R)-HODE ((9R)-hydroxy-(10E,12Z)-octadecadienoate) and (13S)-HODE ((13S)-hydroxy-(9Z,11E)-octadecadienoate) its major products. During neuroinflammation, plays a role in neuronal secretion of specialized preresolving mediators (SPMs) 15R-lipoxin A4 that regulates phagocytic microglia. In Equus caballus (Horse), this protein is Prostaglandin G/H synthase 2 (PTGS2).